Reading from the N-terminus, the 130-residue chain is Small ribosomal subunit protein uS9 (130 aa).

It belongs to the universal ribosomal protein uS9 family.

The chain is Small ribosomal subunit protein uS9 from Paraburkholderia phytofirmans (strain DSM 17436 / LMG 22146 / PsJN) (Burkholderia phytofirmans).